A 269-amino-acid polypeptide reads, in one-letter code: Ribosomal RNA small subunit methyltransferase A (269 aa).

S-adenosyl-L-methionine is bound by residues His-12, Leu-14, Gly-39, Glu-60, Asp-81, and Asn-103.

It belongs to the class I-like SAM-binding methyltransferase superfamily. rRNA adenine N(6)-methyltransferase family. RsmA subfamily.

The protein localises to the cytoplasm. It catalyses the reaction adenosine(1518)/adenosine(1519) in 16S rRNA + 4 S-adenosyl-L-methionine = N(6)-dimethyladenosine(1518)/N(6)-dimethyladenosine(1519) in 16S rRNA + 4 S-adenosyl-L-homocysteine + 4 H(+). Its function is as follows. Specifically dimethylates two adjacent adenosines (A1518 and A1519) in the loop of a conserved hairpin near the 3'-end of 16S rRNA in the 30S particle. May play a critical role in biogenesis of 30S subunits. This chain is Ribosomal RNA small subunit methyltransferase A, found in Leptothrix cholodnii (strain ATCC 51168 / LMG 8142 / SP-6) (Leptothrix discophora (strain SP-6)).